The following is a 213-amino-acid chain: Urease accessory protein UreG (213 aa).

14-21 (GPVGSGKT) lines the GTP pocket.

It belongs to the SIMIBI class G3E GTPase family. UreG subfamily. Homodimer. UreD, UreF and UreG form a complex that acts as a GTP-hydrolysis-dependent molecular chaperone, activating the urease apoprotein by helping to assemble the nickel containing metallocenter of UreC. The UreE protein probably delivers the nickel.

The protein resides in the cytoplasm. Facilitates the functional incorporation of the urease nickel metallocenter. This process requires GTP hydrolysis, probably effectuated by UreG. The sequence is that of Urease accessory protein UreG from Mesorhizobium japonicum (strain LMG 29417 / CECT 9101 / MAFF 303099) (Mesorhizobium loti (strain MAFF 303099)).